The sequence spans 130 residues: Small ribosomal subunit protein uS8 (130 aa).

Belongs to the universal ribosomal protein uS8 family. Part of the 30S ribosomal subunit. Contacts proteins S5 and S12.

One of the primary rRNA binding proteins, it binds directly to 16S rRNA central domain where it helps coordinate assembly of the platform of the 30S subunit. The polypeptide is Small ribosomal subunit protein uS8 (Opitutus terrae (strain DSM 11246 / JCM 15787 / PB90-1)).